A 292-amino-acid polypeptide reads, in one-letter code: Keratin-associated protein 10-9 (292 aa).

25 repeat units span residues 26–30 (CCEPP), 31–35 (CCATS), 36–40 (CCAPA), 57–61 (CCQVT), 79–83 (CCQQS), 99–103 (CCVPV), 104–108 (CCKPV), 109–113 (CCVPV), 114–118 (CCGAS), 120–124 (CCQQS), 130–134 (CCASS), 140–144 (CCVPV), 145–149 (CCKPV), 150–154 (CCAPT), 162–166 (CCQQS), 172–176 (CCTSS), 182–186 (YCVPV), 187–191 (CCKPV), 192–196 (CCKPI), 197–201 (CCVPV), 209–213 (CCQQS), 219–223 (CCTTS), 224–228 (CCRPS), 243–247 (CCVPV), and 250–254 (CCAPT). Residues 26–254 (CCEPPCCATS…VPVSSCCAPT (229 aa)) are 25 X 5 AA repeats of C-C-X(3).

It belongs to the KRTAP type 10 family. In terms of assembly, interacts with hair keratins. Restricted to a narrow region of the hair fiber cuticle, lying approximately 20 cell layers above the apex of the dermal papilla of the hair root; not detected in any other tissues.

Functionally, in the hair cortex, hair keratin intermediate filaments are embedded in an interfilamentous matrix, consisting of hair keratin-associated proteins (KRTAP), which are essential for the formation of a rigid and resistant hair shaft through their extensive disulfide bond cross-linking with abundant cysteine residues of hair keratins. The matrix proteins include the high-sulfur and high-glycine-tyrosine keratins. This chain is Keratin-associated protein 10-9 (KRTAP10-9), found in Homo sapiens (Human).